Here is an 892-residue protein sequence, read N- to C-terminus: Alanine--tRNA ligase (892 aa).

Zn(2+)-binding residues include histidine 596, histidine 600, cysteine 700, and histidine 704.

Belongs to the class-II aminoacyl-tRNA synthetase family. Zn(2+) serves as cofactor.

The protein localises to the cytoplasm. It catalyses the reaction tRNA(Ala) + L-alanine + ATP = L-alanyl-tRNA(Ala) + AMP + diphosphate. Functionally, catalyzes the attachment of alanine to tRNA(Ala) in a two-step reaction: alanine is first activated by ATP to form Ala-AMP and then transferred to the acceptor end of tRNA(Ala). Also edits incorrectly charged Ser-tRNA(Ala) and Gly-tRNA(Ala) via its editing domain. The protein is Alanine--tRNA ligase of Methanococcus maripaludis (strain C5 / ATCC BAA-1333).